A 213-amino-acid chain; its full sequence is Ras-related protein Rab-25 (213 aa).

S21, G24, K25, T26, N27, S38, H39, T43, and T44 together coordinate GTP. Residue T26 coordinates Mg(2+). 2 short sequence motifs (switch) span residues 35-49 (NEFS…GVEF) and 67-84 (DTAG…YYRG). The Mg(2+) site is built by T44 and D67. Residues G70, N125, K126, D128, A156, and L157 each contribute to the GTP site. Residues C209 and C210 are each lipidated (S-geranylgeranyl cysteine). C210 is subject to Cysteine methyl ester. Positions 211 to 213 (ISL) are cleaved as a propeptide — removed in mature form.

Belongs to the small GTPase superfamily. Rab family. In terms of assembly, interacts (GTP-bound form) with RAB11FIP1, RAB11FIP2, RAB11FIP3 and RAB11FIP4. Interacts (via the hypervariable C-terminal region) with ITGB1 (via the cytoplasmic region); the interaction is GTP-dependent. Interacts with ITGAV. Associates with the integrin alpha-V/beta-1 heterodimer. Interacts with VPS33B. The cofactor is Mg(2+).

Its subcellular location is the cell membrane. It is found in the cell projection. The protein resides in the pseudopodium membrane. The protein localises to the cytoplasmic vesicle. It carries out the reaction GTP + H2O = GDP + phosphate + H(+). With respect to regulation, regulated by guanine nucleotide exchange factors (GEFs) which promote the exchange of bound GDP for free GTP. Regulated by GTPase activating proteins (GAPs) which increase the GTP hydrolysis activity. Inhibited by GDP dissociation inhibitors (GDIs) which prevent Rab-GDP dissociation. In terms of biological role, the small GTPases Rab are key regulators of intracellular membrane trafficking, from the formation of transport vesicles to their fusion with membranes. Rabs cycle between an inactive GDP-bound form and an active GTP-bound form that is able to recruit to membranes different set of downstream effectors directly responsible for vesicle formation, movement, tethering and fusion. RAB25 regulates epithelial cell differentiation, proliferation and survival, thereby playing key roles in tumorigenesis. Promotes invasive migration of cells in which it functions to localize and maintain integrin alpha-V/beta-1 at the tips of extending pseudopodia. Involved in the regulation of epithelial morphogenesis through the control of CLDN4 expression and localization at tight junctions. May selectively regulate the apical recycling pathway. Together with MYO5B regulates transcytosis. The protein is Ras-related protein Rab-25 (RAB25) of Bos taurus (Bovine).